The chain runs to 432 residues: Enolase (432 aa).

Residue Gln-163 coordinates (2R)-2-phosphoglycerate. The active-site Proton donor is the Glu-205. Asp-242, Glu-285, and Asp-312 together coordinate Mg(2+). Lys-337, Arg-366, Ser-367, and Lys-388 together coordinate (2R)-2-phosphoglycerate. Lys-337 (proton acceptor) is an active-site residue.

The protein belongs to the enolase family. Mg(2+) serves as cofactor.

It localises to the cytoplasm. Its subcellular location is the secreted. The protein localises to the cell surface. The enzyme catalyses (2R)-2-phosphoglycerate = phosphoenolpyruvate + H2O. It participates in carbohydrate degradation; glycolysis; pyruvate from D-glyceraldehyde 3-phosphate: step 4/5. Functionally, catalyzes the reversible conversion of 2-phosphoglycerate (2-PG) into phosphoenolpyruvate (PEP). It is essential for the degradation of carbohydrates via glycolysis. The chain is Enolase from Bifidobacterium longum (strain DJO10A).